The chain runs to 53 residues: Collagen alpha-1(I) chain (53 aa).

Positions 1 to 53 (SYGYBZKSAGVSVPGPMGPSGPRGLPGPPGAPGPZGFZGPPGZPGZPGSSGPM) are disordered. An Allysine modification is found at lysine 7. Position 8 is a phosphoserine (serine 8). A compositionally biased stretch (low complexity) spans 10–23 (GVSVPGPMGPSGPR). 4-hydroxyproline occurs at positions 26, 29, 32, 41, 44, and 47. Residues 34-53 (PZGFZGPPGZPGZPGSSGPM) show a composition bias toward low complexity.

Belongs to the fibrillar collagen family. As to quaternary structure, trimers of one alpha 2(I) and two alpha 1(I) chains. Interacts with MRC2. Interacts with TRAM2. Interacts with MFAP4 in a Ca (2+)-dependent manner. In terms of processing, contains mostly 4-hydroxyproline. Proline residues at the third position of the tripeptide repeating unit (G-X-Y) are hydroxylated in some or all of the chains. Post-translationally, contains 3-hydroxyproline at a few sites. This modification occurs on the first proline residue in the sequence motif Gly-Pro-Hyp, where Hyp is 4-hydroxyproline. Lysine residues at the third position of the tripeptide repeating unit (G-X-Y) are 5-hydroxylated in some or all of the chains. In terms of processing, O-glycosylated on hydroxylated lysine residues. The O-linked glycan consists of a Glc-Gal disaccharide. In terms of tissue distribution, forms the fibrils of tendon, ligaments and bones. In bones the fibrils are mineralized with calcium hydroxyapatite.

Its subcellular location is the secreted. It localises to the extracellular space. It is found in the extracellular matrix. Functionally, type I collagen is a member of group I collagen (fibrillar forming collagen). The sequence is that of Collagen alpha-1(I) chain (COL1A1) from Oryctolagus cuniculus (Rabbit).